Consider the following 269-residue polypeptide: Tryptophan synthase alpha chain (269 aa).

Catalysis depends on proton acceptor residues Glu49 and Asp60.

It belongs to the TrpA family. In terms of assembly, tetramer of two alpha and two beta chains.

It carries out the reaction (1S,2R)-1-C-(indol-3-yl)glycerol 3-phosphate + L-serine = D-glyceraldehyde 3-phosphate + L-tryptophan + H2O. It participates in amino-acid biosynthesis; L-tryptophan biosynthesis; L-tryptophan from chorismate: step 5/5. In terms of biological role, the alpha subunit is responsible for the aldol cleavage of indoleglycerol phosphate to indole and glyceraldehyde 3-phosphate. The sequence is that of Tryptophan synthase alpha chain from Ectopseudomonas mendocina (strain ymp) (Pseudomonas mendocina).